The chain runs to 2617 residues: DNA-directed RNA polymerase subunit beta'' (2617 aa).

Positions 263, 334, 341, and 344 each coordinate Zn(2+).

This sequence belongs to the RNA polymerase beta' chain family. RpoC2 subfamily. As to quaternary structure, in plastids the minimal PEP RNA polymerase catalytic core is composed of four subunits: alpha, beta, beta', and beta''. When a (nuclear-encoded) sigma factor is associated with the core the holoenzyme is formed, which can initiate transcription. Zn(2+) serves as cofactor.

Its subcellular location is the plastid. The protein localises to the chloroplast. It catalyses the reaction RNA(n) + a ribonucleoside 5'-triphosphate = RNA(n+1) + diphosphate. DNA-dependent RNA polymerase catalyzes the transcription of DNA into RNA using the four ribonucleoside triphosphates as substrates. The chain is DNA-directed RNA polymerase subunit beta'' from Oedogonium cardiacum (Filamentous green alga).